A 643-amino-acid chain; its full sequence is Versicolorin B synthase (643 aa).

The propeptide occupies 1 to 41 (MGRNWFQVTAMAVVPVVGIMAAVNPTILSSAASSLPSLGAM). Residues 84–85 (TA) and 105–106 (EA) each bind FAD. An N-linked (GlcNAc...) asparagine glycan is attached at asparagine 116. 171-174 (GAML) is a binding site for FAD. 2 N-linked (GlcNAc...) asparagine glycosylation sites follow: asparagine 221 and asparagine 507. FAD-binding positions include alanine 613 and 624-625 (PM).

This sequence belongs to the GMC oxidoreductase family. As to quaternary structure, homodimer. FAD serves as cofactor. In terms of processing, N-glycosylated.

The protein resides in the cytoplasm. It localises to the cytosol. The enzyme catalyses (2S-3S)-versiconal hemiacetal = versicolorin B + H2O. It carries out the reaction (S)-5'-oxoaverantin + H(+) = (1'S,5'S)-averufin + H2O. The protein operates within mycotoxin biosynthesis; aflatoxin biosynthesis. In terms of biological role, dual cyclase; part of the gene cluster that mediates the biosynthesis of aflatoxins, a group of polyketide-derived furanocoumarins, and part of the most toxic and carcinogenic compounds among the known mycotoxins. The four major aflatoxins produced by A.parasiticus are aflatoxin B1 (AFB1), aflatoxin B2 (AFB2), aflatoxin G1 (AFG1) and aflatoxin G2 (AFG2). Aflk plays a dual role within the aflatoxin pathway, as a 5'-oxoaverantin cyclase that mediates conversion of 5'-oxoaverantin (OAVN) to averufin (AVF), as well as a versicolorin B synthase that converts versiconal (VAL) to versicolorin B (VERB) by closing the bisfuran ring of aflatoxin which is required for DNA-binding, thus giving to aflatoxin its activity as a mutagen. The biosynthesis of aflatoxins begins with the norsolorinic acid synthase aflC that combines a hexanoyl starter unit produced by the fatty acid synthase aflA/aflB and 7 malonyl-CoA extender units to synthesize the precursor NOR. The second step is the conversion of NOR to averantin and requires the norsolorinic acid ketoreductase aflD, which catalyzes the dehydration of norsolorinic acid to form (1'S)-averantin. The norsolorinic acid reductases aflE and aflF may also play a role in the conversion of NOR to AVN. The cytochrome P450 monooxygenase aflG then catalyzes the hydroxylation of AVN to 5'hydroxyaverantin (HAVN). The next step is performed by the 5'-hydroxyaverantin dehydrogenase aflH that transforms HAVN to 5'-oxoaverantin (OAVN) which is further converted to averufin (AVF) by aflK that plays a dual role in the pathway, as a 5'-oxoaverantin cyclase that mediates conversion of 5'-oxoaverantin, as well as a versicolorin B synthase in a later step in the pathway. The averufin oxidase aflI catalyzes the conversion of AVF to versiconal hemiacetal acetate (VHA). VHA is then the substrate for the versiconal hemiacetal acetate esterase aflJ to yield versiconal (VAL). Versicolorin B synthase aflK then converts VAL to versicolorin B (VERB) by closing the bisfuran ring of aflatoxin which is required for DNA-binding, thus giving to aflatoxin its activity as a mutagen. Then, the activity of the versicolorin B desaturase aflL leads to versicolorin A (VERA). A branch point starts from VERB since it can also be converted to dihydrodemethylsterigmatocystin (DMDHST), probably also by aflL, VERA being a precursor for aflatoxins B1 and G1, and DMDHST for aflatoxins B2 and G2. Next, the versicolorin reductase aflM and the cytochrome P450 monooxygenase aflN are involved in conversion of VERA to demethylsterigmatocystin (DMST). AflX and aflY seem also involved in this step, through probable aflX-mediated epoxide ring-opening step following versicolorin A oxidation and aflY-mediated Baeyer-Villiger oxidation required for the formation of the xanthone ring. The methyltransferase aflO then leads to the modification of DMST to sterigmatocystin (ST), and of DMDHST to dihydrosterigmatocystin (DHST). Both ST and DHST are then substrates of the O-methyltransferase aflP to yield O-methylsterigmatocystin (OMST) and dihydro-O-methylsterigmatocystin (DHOMST), respectively. Finally OMST is converted to aflatoxins B1 and G1, and DHOMST to aflatoxins B2 and G2, via the action of several enzymes including O-methylsterigmatocystin oxidoreductase aflQ, the cytochrome P450 monooxygenase aflU, but also the NADH-dependent flavin oxidoreductase nadA which is specifically required for the synthesis of AFG1. This Aspergillus parasiticus (strain ATCC 56775 / NRRL 5862 / SRRC 143 / SU-1) protein is Versicolorin B synthase.